Here is a 537-residue protein sequence, read N- to C-terminus: MGCVQCKDKEATKLTEERDGSLNQSSGYRYGTDPTPQHYPSFGVTSIPNYNNFHGAGGQGLTVFGGVNSSSHTGTLRTRGGTGVTLFVALYDYEARTEDDLSFHKGEKFQILNSSEGDWWEARSLTTGETGYIPSNYVAPVDSIQAEEWYFGKLGRKDAERQLLSFGNPRGTFLIRESETTKGAYSLSIRDWDDMKGDHVKHYKIRKLDNGGYYITTRAQFETLQQLVQHYSERAAGLCCRLVVPCHKGMPRLTDLSVKTKDVWEIPRESLQLIKRLGNGQFGEVWMGTWNGNTKVAIKTLKPGTMSPESFLEEAQIMKKLKHDKLVQLYAVVSEEPIYIVTEYMNKGSLLDFLKDGEGRALKLPNLVDMAAQVAAGMAYIERMNYIHRDLRSANILVGNGLICKIADFGLARLIEDNEYTARQGAKFPIKWTAPEAALYGRFTIKSDVWSFGILLTELVTKGRVPYPGMNNREVLEQVERGYRMPCPQDCPISLHELMIHCWKKDPEERPTFEYLQGFLEDYFTATEPQYQPGENL.

Residue Gly2 is the site of N-myristoyl glycine attachment. 2 S-palmitoyl cysteine lipidation sites follow: Cys3 and Cys6. Thr12 is subject to Phosphothreonine; by PKC. A disordered region spans residues 14–35 (LTEERDGSLNQSSGYRYGTDPT). Ser21 and Ser26 each carry phosphoserine. Positions 82–143 (TGVTLFVALY…PSNYVAPVDS (62 aa)) constitute an SH3 domain. The region spanning 149 to 246 (WYFGKLGRKD…GLCCRLVVPC (98 aa)) is the SH2 domain. Position 185 is a phosphotyrosine (Tyr185). Residues 271-524 (LQLIKRLGNG…YLQGFLEDYF (254 aa)) enclose the Protein kinase domain. ATP contacts are provided by residues 277-285 (LGNGQFGEV) and Lys299. The Proton acceptor role is filled by Asp390. Tyr420 carries the phosphotyrosine; by autocatalysis modification. Phosphotyrosine; by CSK is present on Tyr531.

This sequence belongs to the protein kinase superfamily. Tyr protein kinase family. SRC subfamily. As to quaternary structure, interacts (via its SH3 domain) with PIK3R1 and PRMT8. Interacts with FYB1, PAG1, and SH2D1A. Interacts with CD79A (tyrosine-phosphorylated form); the interaction increases FYN activity. Interacts (via SH2 domain) with CSF1R (tyrosine phosphorylated). Interacts with TOM1L1 (phosphorylated form). Interacts with KDR (tyrosine phosphorylated). Interacts (via SH3 domain) with KLHL2 (via N-terminus). Interacts with SH2D1A and SLAMF1. Interacts with ITCH; the interaction phosphorylates ITCH and negatively regulates its activity. Interacts with FASLG. Interacts with RUNX3. Interacts with KIT. Interacts with EPHA8; possible downstream effector of EPHA8 in regulation of cell adhesion. Interacts with PTK2/FAK1; this interaction leads to PTK2/FAK1 phosphorylation and activation. Interacts with CAV1; this interaction couples integrins to the Ras-ERK pathway. Interacts with UNC119. Interacts (via SH2 domain) with PTPRH (phosphorylated form). Interacts with PTPRO (phosphorylated form). Interacts with PTPRB (phosphorylated form). Interacts with FYB2. Interacts with DSCAM. Interacts with SKAP1 and FYB1; this interaction promotes the phosphorylation of CLNK. Interacts with NEDD9; in the presence of PTK2. Requires Mn(2+) as cofactor. Post-translationally, autophosphorylated at Tyr-420. Phosphorylation on the C-terminal tail at Tyr-531 by CSK maintains the enzyme in an inactive state. PTPRC/CD45 dephosphorylates Tyr-531 leading to activation. Ultraviolet B (UVB) strongly increase phosphorylation at Thr-12 and kinase activity, and promotes translocation from the cytoplasm to the nucleus. Dephosphorylation at Tyr-420 by PTPN2 negatively regulates T-cell receptor signaling. Phosphorylated at tyrosine residues, which can be enhanced by NTN1. Palmitoylated. Palmitoylation at Cys-3 and Cys-6, probably by ZDHHC21, regulates subcellular location.

It localises to the cytoplasm. Its subcellular location is the nucleus. It is found in the cell membrane. The protein resides in the perikaryon. The catalysed reaction is L-tyrosyl-[protein] + ATP = O-phospho-L-tyrosyl-[protein] + ADP + H(+). Its activity is regulated as follows. Inhibited by phosphorylation of Tyr-531 by leukocyte common antigen and activated by dephosphorylation of this site. Non-receptor tyrosine-protein kinase that plays a role in many biological processes including regulation of cell growth and survival, cell adhesion, integrin-mediated signaling, cytoskeletal remodeling, cell motility, immune response and axon guidance. Inactive FYN is phosphorylated on its C-terminal tail within the catalytic domain. Following activation by PKA, the protein subsequently associates with PTK2/FAK1, allowing PTK2/FAK1 phosphorylation, activation and targeting to focal adhesions. Involved in the regulation of cell adhesion and motility through phosphorylation of CTNNB1 (beta-catenin) and CTNND1 (delta-catenin). Regulates cytoskeletal remodeling by phosphorylating several proteins including the actin regulator WAS and the microtubule-associated proteins MAP2 and MAPT. Promotes cell survival by phosphorylating AGAP2/PIKE-A and preventing its apoptotic cleavage. Participates in signal transduction pathways that regulate the integrity of the glomerular slit diaphragm (an essential part of the glomerular filter of the kidney) by phosphorylating several slit diaphragm components including NPHS1, KIRREL1 and TRPC6. Plays a role in neural processes by phosphorylating DPYSL2, a multifunctional adapter protein within the central nervous system, ARHGAP32, a regulator for Rho family GTPases implicated in various neural functions, and SNCA, a small pre-synaptic protein. Involved in reelin signaling by mediating phosphorylation of DAB1 following reelin (RELN)-binding to its receptor. Participates in the downstream signaling pathways that lead to T-cell differentiation and proliferation following T-cell receptor (TCR) stimulation. Phosphorylates PTK2B/PYK2 in response to T-cell receptor activation. Also participates in negative feedback regulation of TCR signaling through phosphorylation of PAG1, thereby promoting interaction between PAG1 and CSK and recruitment of CSK to lipid rafts. CSK maintains LCK and FYN in an inactive form. Promotes CD28-induced phosphorylation of VAV1. In mast cells, phosphorylates CLNK after activation of immunoglobulin epsilon receptor signaling. Can also promote CD244-mediated NK cell activation. The sequence is that of Tyrosine-protein kinase Fyn from Bos taurus (Bovine).